Reading from the N-terminus, the 617-residue chain is MAGAKAYRLGAVLLLIHLIFLISGAEAASFQRNQLLQKEPDLRLENVQKFPSPEMIRALEYIEKLRQQAHREESSPDYNPYQGVSVPLQLKENGEESHLAESSRDALSEDEWMRIILEALRQAENEPPSAPKENKPYALNLEKNFPVDTPDDYETQQWPERKLKHMRFPLMYEENSRENPFKRTNEIVEEQYTPQSLATLESVFQELGKLTGPSNQKRERVDEEQKLYTDDEDDVYKTNNIAYEDVVGGEDWSPIEEKIETQTQEEVRDSKENTEKNEQINEEMKRSGQLGLPDEENRRESKDQLSEDASKVITYLRRLVNAVGSGRSQSGPNGDRAARLLQKPLDSQSIYQLIEISRNLQIPPEDLIEMLKAGEKPNGLVEPEQDLELAVDLDDIPEADLDRPDMFQSKMLSKGGYPKAPGRGMVEALPDGLSVEDILNVLGMENVVNQKSPYFPNQYSQDKALMRLPYGPGKSRANQIPKVAWIPDVESRQAPYENLNDQELGEYLARMLVKYPELLNTNQLKRVPSPVSSEDDLQEEEQLEQAIKEHLGPGSSQEMERLAKVSKRIPVGSLKNEDTPNRQYLDEDMLLKVLEYLNQEQAEQGREHLAKRAMENM.

A signal peptide spans 1 to 30 (MAGAKAYRLGAVLLLIHLIFLISGAEAASF). Position 153 is a sulfotyrosine (Y153). 2 positions are modified to phosphoserine: S176 and S270. 2 stretches are compositionally biased toward basic and acidic residues: residues 261 to 286 (TQTQEEVRDSKENTEKNEQINEEMKR) and 295 to 307 (EENRRESKDQLSE). Residues 261–307 (TQTQEEVRDSKENTEKNEQINEEMKRSGQLGLPDEENRRESKDQLSE) are disordered. S434, S532, S555, and S556 each carry phosphoserine.

Belongs to the chromogranin/secretogranin protein family. In terms of assembly, interacts with Secretogranin III/SCG3.

Its subcellular location is the secreted. Its function is as follows. Neuroendocrine protein of the granin family that regulates the biogenesis of secretory granules. The sequence is that of Secretogranin-2 (Scg2) from Mus musculus (Mouse).